Consider the following 540-residue polypeptide: MNIMMVQNISFLSLHLLLILLLCLRPLTTVADGNSTNIDGWCDKTPYPYPCKRYFIKHSGFRLPTQISEFRVLLVEAAMDRAVSAWDKLTNSSKNCTDFKKQAVLADCINLYGDTVMQLNRTLQGVSSKTGRRCTDFDAQTWLSTALTNTETCRRGSSDLNVSDFTTPIVSNTKISHLISNCLAVNGALLTAGKNDSTTGDSKGFPTWVSRKERRLLQLQSVRANLVVAKDGSGHFKTVQAAIDVAGRRKVTSGRFVIYVKRGIYQENLNVRLNNDNIMLVGDGMRYTIITGGRSVKGGYTTYSSATAGIEGLHFIAKGIAFQNTAGPAKGQAVALRSSSDLSIFYRCSIEGYQDTLMVHSQRQFYRECYIYGTVDFIFGNAAVVFQNCIILPRLPLKGQANVITAQGRTDLFQNTGISIHNSIIIPAPDLKPVVRSVKTYMGRPWMMYSRTVVLKTYIDSVVSPVGWSPWTKGSTYGLDTLFYAEYKNIGPASSTRWRVRWKGFHVLSKASDASAFSVGKFIAGTAWLPGSGIPFTSEL.

Residues 1 to 31 form the signal peptide; sequence MNIMMVQNISFLSLHLLLILLLCLRPLTTVA. A pectinesterase inhibitor 60 region spans residues 32-185; that stretch reads DGNSTNIDGW…SHLISNCLAV (154 aa). Asn34, Asn91, Asn95, Asn120, Asn161, and Asn195 each carry an N-linked (GlcNAc...) asparagine glycan. Residues 225 to 526 are pectinesterase 60; sequence NLVVAKDGSG…FSVGKFIAGT (302 aa). Positions 302 and 332 each coordinate substrate. Catalysis depends on Asp355, which acts as the Proton donor; for pectinesterase activity. Cys369 and Cys389 are oxidised to a cystine. Residue Asp376 is the Nucleophile; for pectinesterase activity of the active site. Positions 444 and 446 each coordinate substrate.

It in the N-terminal section; belongs to the PMEI family. This sequence in the C-terminal section; belongs to the pectinesterase family. As to expression, expressed in siliques.

It is found in the secreted. The protein localises to the cell wall. The catalysed reaction is [(1-&gt;4)-alpha-D-galacturonosyl methyl ester](n) + n H2O = [(1-&gt;4)-alpha-D-galacturonosyl](n) + n methanol + n H(+). The protein operates within glycan metabolism; pectin degradation; 2-dehydro-3-deoxy-D-gluconate from pectin: step 1/5. Functionally, acts in the modification of cell walls via demethylesterification of cell wall pectin. In Arabidopsis thaliana (Mouse-ear cress), this protein is Probable pectinesterase/pectinesterase inhibitor 60 (PME60).